Reading from the N-terminus, the 276-residue chain is UPF0328 protein ECU04_0100 (276 aa).

The interval 1 to 24 (MGIIDVQRSHLTATPSKERDAPAH) is disordered.

This sequence belongs to the UPF0328 family.

This Encephalitozoon cuniculi (strain GB-M1) (Microsporidian parasite) protein is UPF0328 protein ECU04_0100.